We begin with the raw amino-acid sequence, 503 residues long: MDFSIKGCDWSKGSAKGFLTGKSDCIVLGVFEAQTLSGAALDIDEAAKGLVSRVIKAGDIDGKLGKTLFLHEVSGIGASRVLLVGLGKQDAFSQKAYNDAVKAAWRALLGTKVVQVTFTLAQLPVPERASDWGVRAAILALRNETYKFTQMKSKPDASAPALKRIVFSVDPADEKAAKIAAKQAVALANGMDLTRDLGNLPGNVCTPTYLANTAKKLAKDWGLKADVLGLKQIQALKMSSFLSVAKGSVEPPQFIVLHYQGAAAKAAPVVLVGKGITFDSGGISLKPGEGMDEMKYDMCGAGSVLGTIRAVAEMGLKINVVAIVPTCENMPAGNANKPGDIVTSMKGLTIEVLNTDAEGRLILCDALTYAERFKPAAVIDVATLTGACIIALGHHNTGLFSKDDALAGELLDASREAGDPAWRLPLDDEYQDQLKSNFADLANIGGRPAGSVTAACFLSRFAENYPWAHLDIAGTAWKSGAAKGATGRPVPLLAQFLIDRAGA.

Mn(2+) contacts are provided by lysine 274 and aspartate 279. Residue lysine 286 is part of the active site. Positions 297, 356, and 358 each coordinate Mn(2+). The active site involves arginine 360.

Belongs to the peptidase M17 family. Requires Mn(2+) as cofactor.

The protein localises to the cytoplasm. The enzyme catalyses Release of an N-terminal amino acid, Xaa-|-Yaa-, in which Xaa is preferably Leu, but may be other amino acids including Pro although not Arg or Lys, and Yaa may be Pro. Amino acid amides and methyl esters are also readily hydrolyzed, but rates on arylamides are exceedingly low.. It carries out the reaction Release of an N-terminal amino acid, preferentially leucine, but not glutamic or aspartic acids.. Presumably involved in the processing and regular turnover of intracellular proteins. Catalyzes the removal of unsubstituted N-terminal amino acids from various peptides. The protein is Probable cytosol aminopeptidase of Burkholderia thailandensis (strain ATCC 700388 / DSM 13276 / CCUG 48851 / CIP 106301 / E264).